A 248-amino-acid polypeptide reads, in one-letter code: Killer cell lectin-like receptor subfamily I member 1 (248 aa).

Over 1 to 80 the chain is Cytoplasmic; sequence MLHSKRREYT…RQGPKSTVWR (80 aa). Short sequence motifs (ITIM motif) lie at residues 16–21 and 47–52; these read VTYTEL and LKYGEL. Residues 81-101 traverse the membrane as a helical; Signal-anchor for type II membrane protein segment; sequence VVTGMLGALCVVLMTTTGILL. Residues 102 to 248 lie on the Extracellular side of the membrane; sequence PKLFSSQEEQ…KKSYICEFNI (147 aa). Intrachain disulfides connect Cys132/Cys145, Cys161/Cys244, and Cys223/Cys236. The C-type lectin domain maps to 139–245; that stretch reads FGNNFYCVFK…CSAKKSYICE (107 aa). N-linked (GlcNAc...) asparagine glycosylation is found at Asn197, Asn214, and Asn220.

Heterodimer with KLRE1. Interacts with PTPN6. In terms of tissue distribution, expressed in natural killer (NK) cells.

Its subcellular location is the cell membrane. Its function is as follows. Lectin-like receptor for natural killer (NK) cells. Heterodimer formation with KLRE1 mediates inhibition of NK cell cytolytic activity. This Mus musculus (Mouse) protein is Killer cell lectin-like receptor subfamily I member 1.